We begin with the raw amino-acid sequence, 360 residues long: Peptide chain release factor 1 (360 aa).

N5-methylglutamine is present on Gln233. Residues 283–305 form a disordered region; sequence KLDAERAADRRSQVGSGDRSERI.

It belongs to the prokaryotic/mitochondrial release factor family. In terms of processing, methylated by PrmC. Methylation increases the termination efficiency of RF1.

It is found in the cytoplasm. Its function is as follows. Peptide chain release factor 1 directs the termination of translation in response to the peptide chain termination codons UAG and UAA. The chain is Peptide chain release factor 1 from Methylocella silvestris (strain DSM 15510 / CIP 108128 / LMG 27833 / NCIMB 13906 / BL2).